The chain runs to 133 residues: MKYLILSLVANLLVFGVLSAIGLNINILAAMMMILVIPITISGILFFKTNLDKTYIFFNILFIDFYYYIYNVHLMALPRFNSYIKAEMMELEDIDVLITSKDFGFDEILFFTLYLLLILIILYYLKKQVKTKS.

The next 4 helical transmembrane spans lie at 3–23, 27–47, 55–75, and 103–123; these read YLILSLVANLLVFGVLSAIGL, ILAAMMMILVIPITISGILFF, YIFFNILFIDFYYYIYNVHLM, and FGFDEILFFTLYLLLILIILY.

Its subcellular location is the cell membrane. Accessory element involved in the expression of sarA and several virulence factors. Modulates SarA production and/or function in a strain-dependent manner. Affects the transcription of the accessory gene regulator (agr) and genes encoding virulence factors including alpha toxin (hla) and protein A (spa). The protein is Protein msa (msa) of Staphylococcus aureus (strain bovine RF122 / ET3-1).